Reading from the N-terminus, the 510-residue chain is Maturase K (510 aa).

Belongs to the intron maturase 2 family. MatK subfamily.

Its subcellular location is the plastid. The protein localises to the chloroplast. In terms of biological role, usually encoded in the trnK tRNA gene intron. Probably assists in splicing its own and other chloroplast group II introns. This is Maturase K from Taxus cuspidata (Japanese yew).